The following is a 552-amino-acid chain: Putative acetolactate synthase large subunit IlvB2 (552 aa).

Glutamate 48 serves as a coordination point for thiamine diphosphate. Residues 262–285 and 309–328 contribute to the FAD site; these read FGDG…VGVS and DPDP…ITTS. The segment at 394–474 is thiamine pyrophosphate binding; that stretch reads TCISWTFRGI…VTWAVLNDGQ (81 aa). Aspartate 445 serves as a coordination point for Mg(2+).

This sequence belongs to the TPP enzyme family. In terms of assembly, heterodimer of large catalytic subunit and small regulatory subunit. It depends on Mg(2+) as a cofactor. The cofactor is thiamine diphosphate.

The catalysed reaction is 2 pyruvate + H(+) = (2S)-2-acetolactate + CO2. It functions in the pathway amino-acid biosynthesis; L-isoleucine biosynthesis; L-isoleucine from 2-oxobutanoate: step 1/4. The protein operates within amino-acid biosynthesis; L-valine biosynthesis; L-valine from pyruvate: step 1/4. In terms of biological role, catalyzes the conversion of 2 pyruvate molecules into acetolactate in the first common step of the biosynthetic pathway of the branched-amino acids such as leucine, isoleucine, and valine. This is Putative acetolactate synthase large subunit IlvB2 (ilvB2) from Mycobacterium tuberculosis (strain ATCC 25618 / H37Rv).